A 319-amino-acid polypeptide reads, in one-letter code: ATP-dependent 6-phosphofructokinase 1 (319 aa).

Glycine 11 is an ATP binding site. 21–25 (RAVTR) is an ADP binding site. Residues 72 to 73 (RC) and 102 to 105 (GDGS) each bind ATP. A Mg(2+)-binding site is contributed by aspartate 103. 125 to 127 (TID) provides a ligand contact to substrate. The Proton acceptor role is filled by aspartate 127. Arginine 154 serves as a coordination point for ADP. Substrate is bound by residues arginine 162 and 169 to 171 (MGR). Residues 185-187 (GAE) and 213-215 (KTH) contribute to the ADP site. Residues glutamate 222, arginine 243, and 249-252 (HIQR) contribute to the substrate site.

Belongs to the phosphofructokinase type A (PFKA) family. ATP-dependent PFK group I subfamily. Prokaryotic clade 'B1' sub-subfamily. As to quaternary structure, homotetramer. It depends on Mg(2+) as a cofactor.

Its subcellular location is the cytoplasm. It catalyses the reaction beta-D-fructose 6-phosphate + ATP = beta-D-fructose 1,6-bisphosphate + ADP + H(+). It functions in the pathway carbohydrate degradation; glycolysis; D-glyceraldehyde 3-phosphate and glycerone phosphate from D-glucose: step 3/4. Its activity is regulated as follows. Allosterically activated by ADP and other diphosphonucleosides, and allosterically inhibited by phosphoenolpyruvate. Its function is as follows. Catalyzes the phosphorylation of D-fructose 6-phosphate to fructose 1,6-bisphosphate by ATP, the first committing step of glycolysis. This chain is ATP-dependent 6-phosphofructokinase 1, found in Clostridium perfringens (strain 13 / Type A).